The primary structure comprises 331 residues: MLVLGIESTAHTLGVGIAKDQPPYILANERDTFVPKEGGMKPGDLLKHHAEVSGTILRRALEKANISINDINYIAVALGPGIGPALRVGATLARALSLKYNKKLVPVNHGIGHIEIGYLTTEAKDPLILYLSGGNTIITTFYKGRFRIFGETLDIALGNMMDVFVREVNLAPPYIINGKHAIDICSEKGSKLLKLPYVVKGQDMSFSGLLTAALRLVGKEKLEDICYSIREIAFDMLLEATERALALTSKKELMIVGGVAASVSLRKKLEELGKEWDVQIKIVPPEFAGDNGAMIAYAGMLAASKGVFIDVDKSYIRPRWRVDEVDIPWRN.

Residues His109, His113, and Tyr130 each coordinate Fe cation. Residues 130 to 134 (YLSGG), Asp162, Asp183, and Ser262 each bind substrate. Asp290 contacts Fe cation.

It belongs to the KAE1 / TsaD family. Fe(2+) serves as cofactor.

It is found in the cytoplasm. The enzyme catalyses L-threonylcarbamoyladenylate + adenosine(37) in tRNA = N(6)-L-threonylcarbamoyladenosine(37) in tRNA + AMP + H(+). In terms of biological role, required for the formation of a threonylcarbamoyl group on adenosine at position 37 (t(6)A37) in tRNAs that read codons beginning with adenine. Is probably involved in the transfer of the threonylcarbamoyl moiety of threonylcarbamoyl-AMP (TC-AMP) to the N6 group of A37. This is tRNA N6-adenosine threonylcarbamoyltransferase from Saccharolobus islandicus (strain M.16.27) (Sulfolobus islandicus).